The chain runs to 111 residues: Small ribosomal subunit protein uS17 (111 aa).

It belongs to the universal ribosomal protein uS17 family. Part of the 30S ribosomal subunit.

Its function is as follows. One of the primary rRNA binding proteins, it binds specifically to the 5'-end of 16S ribosomal RNA. The protein is Small ribosomal subunit protein uS17 of Archaeoglobus fulgidus (strain ATCC 49558 / DSM 4304 / JCM 9628 / NBRC 100126 / VC-16).